The following is a 400-amino-acid chain: Argininosuccinate synthase (400 aa).

ATP is bound by residues 11-19 (AYSGGLDTS) and Ala38. Residues Tyr89 and Ser94 each coordinate L-citrulline. Gly119 provides a ligand contact to ATP. L-aspartate-binding residues include Thr121, Asn125, and Asp126. Asn125 is a binding site for L-citrulline. L-citrulline-binding residues include Arg129, Ser178, Ser187, Glu263, and Tyr275.

The protein belongs to the argininosuccinate synthase family. Type 1 subfamily. As to quaternary structure, homotetramer.

The protein localises to the cytoplasm. It carries out the reaction L-citrulline + L-aspartate + ATP = 2-(N(omega)-L-arginino)succinate + AMP + diphosphate + H(+). Its pathway is amino-acid biosynthesis; L-arginine biosynthesis; L-arginine from L-ornithine and carbamoyl phosphate: step 2/3. The chain is Argininosuccinate synthase from Desulfatibacillum aliphaticivorans.